The sequence spans 129 residues: Large ribosomal subunit protein bL12 (129 aa).

A compositionally biased stretch (basic and acidic residues) spans M95 to G123. The interval M95 to K129 is disordered.

This sequence belongs to the bacterial ribosomal protein bL12 family. Homodimer. Part of the ribosomal stalk of the 50S ribosomal subunit. Forms a multimeric L10(L12)X complex, where L10 forms an elongated spine to which 2 to 4 L12 dimers bind in a sequential fashion. Binds GTP-bound translation factors.

In terms of biological role, forms part of the ribosomal stalk which helps the ribosome interact with GTP-bound translation factors. Is thus essential for accurate translation. The chain is Large ribosomal subunit protein bL12 from Acaryochloris marina (strain MBIC 11017).